A 264-amino-acid polypeptide reads, in one-letter code: Small ribosomal subunit protein eS4 (264 aa).

One can recognise an S4 RNA-binding domain in the interval 42-104 (LPLVIIMRNR…TNENFRLLYD (63 aa)).

It belongs to the eukaryotic ribosomal protein eS4 family.

It is found in the cytoplasm. This chain is Small ribosomal subunit protein eS4 (RPS4), found in Solanum tuberosum (Potato).